The primary structure comprises 1516 residues: Myosin-52 (1516 aa).

The Myosin N-terminal SH3-like domain occupies 7 to 62 (YKGLQCWIPDEQSQWIPGSIKDCRVEGEKAFLTVQDENENETVITVKPDDLNYEGR). One can recognise a Myosin motor domain in the interval 73 to 766 (SDADDLTDLS…VTPLLESARD (694 aa)). Residue 167-174 (GESGAGKT) participates in ATP binding. An actin-binding region spans residues 647–669 (LVSLMSTINETNAHYIRCIKPNE). IQ domains lie at 793–813 (RKRV…RHTE), 818–838 (SSNI…KEFI), 840–865 (TKNS…EKTK), 866–886 (HDAT…KHYK), and 888–917 (LQYY…ESTK). Positions 926–1034 (YRLESRLFEI…LKSQLKNYDM (109 aa)) form a coiled coil. A phosphoserine mark is found at Ser-1065 and Ser-1072. Residues 1163 to 1431 (ERYCVHTLEY…SELSKNIVAE (269 aa)) enclose the Dilute domain.

Belongs to the TRAFAC class myosin-kinesin ATPase superfamily. Myosin family.

Its subcellular location is the cytoplasm. Functionally, involved in cell wall deposition where it has a role in the localization of mok1. This chain is Myosin-52 (myo52), found in Schizosaccharomyces pombe (strain 972 / ATCC 24843) (Fission yeast).